The following is a 365-amino-acid chain: Serine/threonine-protein kinase SAPK6 (365 aa).

In terms of domain architecture, Protein kinase spans 4–260; sequence YELLKDIGSG…IREIRNHPWF (257 aa). ATP-binding positions include 10-18 and lysine 33; that span reads IGSGNFGVA. Aspartate 123 functions as the Proton acceptor in the catalytic mechanism. Residues 298-365 are disordered; the sequence is VQEAKTPPPS…AHASCDLQKS (68 aa). Residues 317 to 347 show a composition bias toward acidic residues; it reads TEEEEQEDGKNPDDDEGDRDEEEGEEGDSED.

It belongs to the protein kinase superfamily. Ser/Thr protein kinase family. As to quaternary structure, interacts with BZIP46. May be phosphorylated. In terms of tissue distribution, expressed in leaf blades and leaf sheaths. Expressed in shoots and roots of young seedlings.

The enzyme catalyses L-seryl-[protein] + ATP = O-phospho-L-seryl-[protein] + ADP + H(+). It carries out the reaction L-threonyl-[protein] + ATP = O-phospho-L-threonyl-[protein] + ADP + H(+). Its activity is regulated as follows. Activated by hyperosmotic stress. May play a role in signal transduction of hyperosmotic response. Can phosphorylate ABI5 in vitro. Can phosphorylate BZIP46 in vitro. The protein is Serine/threonine-protein kinase SAPK6 of Oryza sativa subsp. japonica (Rice).